A 505-amino-acid chain; its full sequence is Aminoaldehyde dehydrogenase 2 (505 aa).

Na(+) contacts are provided by Ile-31 and Asp-99. NAD(+)-binding positions include 159 to 161 and 185 to 188; these read TPW and KPSE. Leu-189 serves as a coordination point for Na(+). 238–242 serves as a coordination point for NAD(+); the sequence is GSGPT. The active-site Proton acceptor is Glu-260. Leu-261 is a binding site for NAD(+). Cys-295 (nucleophile) is an active-site residue. 2 residues coordinate NAD(+): Glu-394 and Trp-460.

Belongs to the aldehyde dehydrogenase family. As to quaternary structure, forms homodimers.

The enzyme catalyses 4-aminobutanal + NAD(+) + H2O = 4-aminobutanoate + NADH + 2 H(+). The catalysed reaction is 3-aminopropanal + NAD(+) + H2O = beta-alanine + NADH + 2 H(+). It catalyses the reaction 4-(trimethylamino)butanal + NAD(+) + H2O = 4-(trimethylamino)butanoate + NADH + 2 H(+). It carries out the reaction 4-guanidinobutanal + NAD(+) + H2O = 4-guanidinobutanoate + NADH + 2 H(+). The protein operates within amine and polyamine biosynthesis; betaine biosynthesis via choline pathway; betaine from betaine aldehyde: step 1/1. Its function is as follows. Dehydrogenase that catalyzes the oxidation of several aminoaldehydes. Metabolizes and detoxifies aldehyde products of polyamine degradation to non-toxic amino acids. Catalyzes the oxidation of 4-aminobutanal and 3-aminopropanal to 4-aminobutanoate and beta-alanine, respectively. Catalyzes the oxidation of 4-(trimethylamino)butanal and 4-guanidinobutanal to 4-trimethylammoniobutanoate and 4-guanidinobutanoate, respectively. This is Aminoaldehyde dehydrogenase 2 from Solanum lycopersicum (Tomato).